The sequence spans 509 residues: UDP-N-acetylmuramyl-tripeptide synthetase (509 aa).

124–130 (GTNGKTS) is an ATP binding site. UDP-N-acetyl-alpha-D-muramoyl-L-alanyl-D-glutamate-binding positions include 164 to 165 (TT), S191, and R199. K231 carries the post-translational modification N6-carboxylysine.

Belongs to the MurCDEF family. MurE subfamily. Post-translationally, carboxylation is probably crucial for Mg(2+) binding and, consequently, for the gamma-phosphate positioning of ATP.

It localises to the cytoplasm. Its pathway is cell wall biogenesis; peptidoglycan biosynthesis. Catalyzes the addition of an amino acid to the nucleotide precursor UDP-N-acetylmuramoyl-L-alanyl-D-glutamate (UMAG) in the biosynthesis of bacterial cell-wall peptidoglycan. This chain is UDP-N-acetylmuramyl-tripeptide synthetase, found in Tropheryma whipplei (strain TW08/27) (Whipple's bacillus).